Here is a 1373-residue protein sequence, read N- to C-terminus: DNA-directed RNA polymerase subunit beta (1373 aa).

The protein belongs to the RNA polymerase beta chain family. In terms of assembly, the RNAP catalytic core consists of 2 alpha, 1 beta, 1 beta' and 1 omega subunit. When a sigma factor is associated with the core the holoenzyme is formed, which can initiate transcription.

It carries out the reaction RNA(n) + a ribonucleoside 5'-triphosphate = RNA(n+1) + diphosphate. Its function is as follows. DNA-dependent RNA polymerase catalyzes the transcription of DNA into RNA using the four ribonucleoside triphosphates as substrates. This is DNA-directed RNA polymerase subunit beta from Rickettsia akari (strain Hartford).